The following is a 160-amino-acid chain: Lipoprotein signal peptidase (160 aa).

Transmembrane regions (helical) follow at residues Ile-13–Ile-33, Trp-72–Leu-92, and Ser-104–Val-124. Residues Asp-125 and Asp-143 contribute to the active site. Residues Trp-134–Met-154 form a helical membrane-spanning segment.

Belongs to the peptidase A8 family.

The protein resides in the cell inner membrane. The catalysed reaction is Release of signal peptides from bacterial membrane prolipoproteins. Hydrolyzes -Xaa-Yaa-Zaa-|-(S,diacylglyceryl)Cys-, in which Xaa is hydrophobic (preferably Leu), and Yaa (Ala or Ser) and Zaa (Gly or Ala) have small, neutral side chains.. The protein operates within protein modification; lipoprotein biosynthesis (signal peptide cleavage). In terms of biological role, this protein specifically catalyzes the removal of signal peptides from prolipoproteins. The chain is Lipoprotein signal peptidase from Buchnera aphidicola subsp. Acyrthosiphon pisum (strain 5A).